The primary structure comprises 343 residues: Leucine-rich repeat-containing protein 23 (343 aa).

Residues 1-30 (MSDEDDLEDSEPDQDDSEKEEDEKETEEGE) show a composition bias toward acidic residues. The tract at residues 1–47 (MSDEDDLEDSEPDQDDSEKEEDEKETEEGEDYRKEGEEFPEEWLPTP) is disordered. LRR repeat units lie at residues 92 to 113 (HLRY…NYLT), 114 to 134 (HLLW…NELP), 135 to 155 (YLQI…ISHP), 156 to 177 (RLET…DPEK), 180 to 200 (SLHT…INLP), 201 to 222 (KLKN…EDLS), 223 to 244 (NLTT…SREM), and 246 to 267 (SLQY…AKLR). The tract at residues 208–343 (AQNMLKKVEG…RDLEPEQSLI (136 aa)) is interaction with RSPH9. One can recognise an LRRCT domain in the interval 280 to 318 (NPCTDETSYRQEALVQMPYLERLDKEFYEEEERAEADVI). Residues 307–329 (YEEEERAEADVIRQRLKEEKEQE) are a coiled coil. A compositionally biased stretch (basic and acidic residues) spans 318 to 337 (IRQRLKEEKEQEPEPQRDLE). The segment at 318 to 343 (IRQRLKEEKEQEPEPQRDLEPEQSLI) is disordered.

Component of the axonemal radial spoke complex. Interacts with RSPH3. Interacts with RSPH9. As to expression, expressed in spermatozoa.

It localises to the cell projection. It is found in the cilium. The protein localises to the flagellum. The protein resides in the cytoplasm. Its subcellular location is the cytoskeleton. It localises to the flagellum axoneme. Its function is as follows. Essential for sperm motility and male fertility. Plays an important role in the proper assembly of the third radial spoke (RS3) head and the bridge structure between RS2 and RS3 in the sperm flagella. This chain is Leucine-rich repeat-containing protein 23 (LRRC23), found in Homo sapiens (Human).